Consider the following 258-residue polypeptide: Phosphonates import ATP-binding protein PhnC 1 (258 aa).

In terms of domain architecture, ABC transporter spans 2–246 (IEFKDVGLVY…TFEEIYGRSI (245 aa)). An ATP-binding site is contributed by 35–42 (GLSGAGKS).

The protein belongs to the ABC transporter superfamily. Phosphonates importer (TC 3.A.1.9.1) family. The complex is composed of two ATP-binding proteins (PhnC), two transmembrane proteins (PhnE) and a solute-binding protein (PhnD).

Its subcellular location is the cell membrane. The catalysed reaction is phosphonate(out) + ATP + H2O = phosphonate(in) + ADP + phosphate + H(+). In terms of biological role, part of the ABC transporter complex PhnCDE involved in phosphonates import. Responsible for energy coupling to the transport system. The polypeptide is Phosphonates import ATP-binding protein PhnC 1 (Oceanobacillus iheyensis (strain DSM 14371 / CIP 107618 / JCM 11309 / KCTC 3954 / HTE831)).